The following is a 739-amino-acid chain: Phosphoribosylformylglycinamidine synthase subunit PurL (739 aa).

Residue His-54 is part of the active site. Residues Tyr-57 and Lys-96 each coordinate ATP. Glu-98 provides a ligand contact to Mg(2+). Residues 99-102 and Arg-121 each bind substrate; that span reads SHNH. His-100 acts as the Proton acceptor in catalysis. A Mg(2+)-binding site is contributed by Asp-122. Gln-245 is a substrate binding site. Asp-273 is a binding site for Mg(2+). Residue 317-319 coordinates substrate; it reads ESQ. The ATP site is built by Asp-500 and Gly-537. A Mg(2+)-binding site is contributed by Asn-538. Ser-540 is a binding site for substrate.

Belongs to the FGAMS family. In terms of assembly, monomer. Part of the FGAM synthase complex composed of 1 PurL, 1 PurQ and 2 PurS subunits.

It localises to the cytoplasm. The enzyme catalyses N(2)-formyl-N(1)-(5-phospho-beta-D-ribosyl)glycinamide + L-glutamine + ATP + H2O = 2-formamido-N(1)-(5-O-phospho-beta-D-ribosyl)acetamidine + L-glutamate + ADP + phosphate + H(+). It participates in purine metabolism; IMP biosynthesis via de novo pathway; 5-amino-1-(5-phospho-D-ribosyl)imidazole from N(2)-formyl-N(1)-(5-phospho-D-ribosyl)glycinamide: step 1/2. Its function is as follows. Part of the phosphoribosylformylglycinamidine synthase complex involved in the purines biosynthetic pathway. Catalyzes the ATP-dependent conversion of formylglycinamide ribonucleotide (FGAR) and glutamine to yield formylglycinamidine ribonucleotide (FGAM) and glutamate. The FGAM synthase complex is composed of three subunits. PurQ produces an ammonia molecule by converting glutamine to glutamate. PurL transfers the ammonia molecule to FGAR to form FGAM in an ATP-dependent manner. PurS interacts with PurQ and PurL and is thought to assist in the transfer of the ammonia molecule from PurQ to PurL. The chain is Phosphoribosylformylglycinamidine synthase subunit PurL from Bacillus cereus (strain B4264).